The primary structure comprises 182 residues: ATP synthase subunit delta, mitochondrial (182 aa).

The transit peptide at 1-17 (MFRTFGRRLVSCTLPLL) directs the protein to the mitochondrion.

Belongs to the ATPase epsilon chain family. In terms of assembly, F-type ATPases have 2 components, F(1) - the catalytic core - and F(o) - the membrane proton channel. F(1) has five subunits: alpha(3), beta(3), gamma(1), delta(1), epsilon(1), plus the additional subunit P18 (Tb427.05.1710) that is not present in F(1)F(o) ATP synthase from metazoa. Subunit P18 (Tb927.5.1710) interacts with the alpha subunit with a 1:1 stoichiometry; the interaction is direct. Subunit gamma is part of the central stalk. F(o) has three main subunits: a, b and c. The trypanosomal ATPase complex contains additional subunits that are not present in the F(1)F(o) ATP synthase from metazoa.

It localises to the mitochondrion. It is found in the mitochondrion inner membrane. Its function is as follows. Mitochondrial membrane ATP synthase (F(1)F(o) ATP synthase) produces ATP from ADP in the presence of a proton gradient across the membrane which is generated by electron transport complexes of the respiratory chain. F-type ATPases consist of two structural domains, F(1) - containing the extramembraneous catalytic core, and F(o) - containing the membrane proton channel, linked together by a central stalk and a peripheral stalk. During catalysis, ATP synthesis in the catalytic domain of F(1) is coupled via a rotary mechanism of the central stalk subunits to proton translocation. Subunits alpha and beta form the catalytic core in F(1). Rotation of the central stalk against the surrounding alpha(3)beta(3) subunits leads to hydrolysis of ATP in three separate catalytic sites on the beta subunits. Contrary to the procyclic, insect form that requires F(1)F(o) ATP synthase for ATP synthesis, the bloodstream form relies on ATP hydrolysis by F(1)F(o) ATP synthase to maintain its mitochondrial membrane potential. The protein is ATP synthase subunit delta, mitochondrial of Trypanosoma brucei brucei.